We begin with the raw amino-acid sequence, 271 residues long: Acyl-[acyl-carrier-protein]--UDP-N-acetylglucosamine O-acyltransferase (271 aa).

It belongs to the transferase hexapeptide repeat family. LpxA subfamily. Homotrimer.

The protein resides in the cytoplasm. The catalysed reaction is a (3R)-hydroxyacyl-[ACP] + UDP-N-acetyl-alpha-D-glucosamine = a UDP-3-O-[(3R)-3-hydroxyacyl]-N-acetyl-alpha-D-glucosamine + holo-[ACP]. It functions in the pathway glycolipid biosynthesis; lipid IV(A) biosynthesis; lipid IV(A) from (3R)-3-hydroxytetradecanoyl-[acyl-carrier-protein] and UDP-N-acetyl-alpha-D-glucosamine: step 1/6. Involved in the biosynthesis of lipid A, a phosphorylated glycolipid that anchors the lipopolysaccharide to the outer membrane of the cell. The protein is Acyl-[acyl-carrier-protein]--UDP-N-acetylglucosamine O-acyltransferase of Sulfurihydrogenibium sp. (strain YO3AOP1).